The sequence spans 367 residues: Peptide chain release factor 2 (367 aa).

Position 250 is an N5-methylglutamine (Gln-250).

Belongs to the prokaryotic/mitochondrial release factor family. Post-translationally, methylated by PrmC. Methylation increases the termination efficiency of RF2.

The protein resides in the cytoplasm. Functionally, peptide chain release factor 2 directs the termination of translation in response to the peptide chain termination codons UGA and UAA. This is Peptide chain release factor 2 from Chloroflexus aggregans (strain MD-66 / DSM 9485).